Here is a 243-residue protein sequence, read N- to C-terminus: Hydroxyacylglutathione hydrolase (243 aa).

Zn(2+)-binding residues include His-52, His-54, Asp-56, His-57, His-108, Asp-125, and His-163.

Belongs to the metallo-beta-lactamase superfamily. Glyoxalase II family. In terms of assembly, monomer. Zn(2+) serves as cofactor.

The enzyme catalyses an S-(2-hydroxyacyl)glutathione + H2O = a 2-hydroxy carboxylate + glutathione + H(+). It functions in the pathway secondary metabolite metabolism; methylglyoxal degradation; (R)-lactate from methylglyoxal: step 2/2. In terms of biological role, thiolesterase that catalyzes the hydrolysis of S-D-lactoyl-glutathione to form glutathione and D-lactic acid. In Haemophilus influenzae (strain PittGG), this protein is Hydroxyacylglutathione hydrolase.